The following is a 352-amino-acid chain: tRNA pseudouridine synthase D (352 aa).

Catalysis depends on D81, which acts as the Nucleophile. Residues 157-303 form the TRUD domain; it reads GVPNYFGTQR…MDHERRILRL (147 aa).

Belongs to the pseudouridine synthase TruD family.

It carries out the reaction uridine(13) in tRNA = pseudouridine(13) in tRNA. Its function is as follows. Responsible for synthesis of pseudouridine from uracil-13 in transfer RNAs. This Pseudomonas putida (strain ATCC 700007 / DSM 6899 / JCM 31910 / BCRC 17059 / LMG 24140 / F1) protein is tRNA pseudouridine synthase D.